The chain runs to 443 residues: Putative cytochrome bd menaquinol oxidase subunit I (443 aa).

9 consecutive transmembrane segments (helical) span residues 19 to 39 (IIFA…ELIY), 60 to 80 (VLLG…ALLW), 93 to 113 (LPFQ…SIYV), 125 to 145 (IVAV…ITNV), 176 to 196 (FFIT…FIVA), 219 to 239 (ALLL…LNGH), 322 to 342 (LFNA…IGVV), 357 to 377 (LIIF…GWIF), and 405 to 425 (VLFL…VYVL). A heme b-binding site is contributed by His182.

The protein belongs to the cytochrome ubiquinol oxidase subunit 1 family. It depends on heme b as a cofactor.

The protein localises to the cell membrane. May have a role in sporulation. Can compensate for the loss of cytochrome aa3. In Bacillus subtilis (strain 168), this protein is Putative cytochrome bd menaquinol oxidase subunit I (ythA).